We begin with the raw amino-acid sequence, 302 residues long: Oxygen-dependent coproporphyrinogen-III oxidase (302 aa).

Residue Ser94 participates in substrate binding. A divalent metal cation is bound by residues His98 and His108. Catalysis depends on His108, which acts as the Proton donor. Residue 110-112 (NVR) participates in substrate binding. 2 residues coordinate a divalent metal cation: His147 and His177. The segment at 242-277 (YVEFNLVWDRGTLFGLQSGGRTESILMSMPPLVRWE) is important for dimerization. Residue 260–262 (GGR) coordinates substrate.

It belongs to the aerobic coproporphyrinogen-III oxidase family. As to quaternary structure, homodimer. It depends on a divalent metal cation as a cofactor.

The protein resides in the cytoplasm. The enzyme catalyses coproporphyrinogen III + O2 + 2 H(+) = protoporphyrinogen IX + 2 CO2 + 2 H2O. It participates in porphyrin-containing compound metabolism; protoporphyrin-IX biosynthesis; protoporphyrinogen-IX from coproporphyrinogen-III (O2 route): step 1/1. Functionally, involved in the heme biosynthesis. Catalyzes the aerobic oxidative decarboxylation of propionate groups of rings A and B of coproporphyrinogen-III to yield the vinyl groups in protoporphyrinogen-IX. This Chromobacterium violaceum (strain ATCC 12472 / DSM 30191 / JCM 1249 / CCUG 213 / NBRC 12614 / NCIMB 9131 / NCTC 9757 / MK) protein is Oxygen-dependent coproporphyrinogen-III oxidase.